We begin with the raw amino-acid sequence, 224 residues long: Holliday junction branch migration complex subunit RuvA (224 aa).

Residues 1–64 (MIGKVAGILD…EDLLQLFGFP (64 aa)) form a domain I region. The segment at 65–143 (TMIEKEWHRL…ALMAMGGGTA (79 aa)) is domain II. Residues 141–185 (GTAALAPSEPPEPEPGTSSGSRRKTRAPEPPRPSHTADALSALAN) are disordered. The tract at residues 144-170 (ALAPSEPPEPEPGTSSGSRRKTRAPEP) is flexible linker. The domain III stretch occupies residues 171-224 (PRPSHTADALSALANLGYQPTDAAQAVAQAAGESPDADTAALIRAALKLLAPKS).

It belongs to the RuvA family. As to quaternary structure, homotetramer. Forms an RuvA(8)-RuvB(12)-Holliday junction (HJ) complex. HJ DNA is sandwiched between 2 RuvA tetramers; dsDNA enters through RuvA and exits via RuvB. An RuvB hexamer assembles on each DNA strand where it exits the tetramer. Each RuvB hexamer is contacted by two RuvA subunits (via domain III) on 2 adjacent RuvB subunits; this complex drives branch migration. In the full resolvosome a probable DNA-RuvA(4)-RuvB(12)-RuvC(2) complex forms which resolves the HJ.

The protein resides in the cytoplasm. Its function is as follows. The RuvA-RuvB-RuvC complex processes Holliday junction (HJ) DNA during genetic recombination and DNA repair, while the RuvA-RuvB complex plays an important role in the rescue of blocked DNA replication forks via replication fork reversal (RFR). RuvA specifically binds to HJ cruciform DNA, conferring on it an open structure. The RuvB hexamer acts as an ATP-dependent pump, pulling dsDNA into and through the RuvAB complex. HJ branch migration allows RuvC to scan DNA until it finds its consensus sequence, where it cleaves and resolves the cruciform DNA. The polypeptide is Holliday junction branch migration complex subunit RuvA (Cereibacter sphaeroides (strain ATCC 17029 / ATH 2.4.9) (Rhodobacter sphaeroides)).